The following is a 363-amino-acid chain: GDP-fucose transporter (363 aa).

The next 8 membrane-spanning stretches (helical) occupy residues 30 to 47 (VITA…LVFL), 62 to 79 (FITW…LFLS), 126 to 148 (VSFY…YLIL), 152 to 171 (TSGQ…LLGV), 180 to 202 (LSYT…AIYT), 222 to 244 (LNAL…VFYF), 251 to 273 (TFWI…TGWQ), and 307 to 326 (LLWW…YTYV). Residues 334 to 363 (KNSGASPASEAKSDKVKLLGRDGNAAEESV) form a disordered region. Over residues 344–353 (AKSDKVKLLG) the composition is skewed to basic and acidic residues.

This sequence belongs to the TPT transporter family. SLC35C subfamily.

The protein resides in the golgi apparatus membrane. In terms of biological role, involved in GDP-fucose import from the cytoplasm into the Golgi lumen. The chain is GDP-fucose transporter from Caenorhabditis elegans.